A 35-amino-acid polypeptide reads, in one-letter code: Photosystem II reaction center protein T (35 aa).

The helical transmembrane segment at 3–23 (ALVYTFLLVSTLGILFFAIFF) threads the bilayer.

It belongs to the PsbT family. PSII is composed of 1 copy each of membrane proteins PsbA, PsbB, PsbC, PsbD, PsbE, PsbF, PsbH, PsbI, PsbJ, PsbK, PsbL, PsbM, PsbT, PsbY, PsbZ, Psb30/Ycf12, at least 3 peripheral proteins of the oxygen-evolving complex and a large number of cofactors. It forms dimeric complexes.

The protein localises to the plastid. The protein resides in the chloroplast thylakoid membrane. Found at the monomer-monomer interface of the photosystem II (PS II) dimer, plays a role in assembly and dimerization of PSII. PSII is a light-driven water plastoquinone oxidoreductase, using light energy to abstract electrons from H(2)O, generating a proton gradient subsequently used for ATP formation. The sequence is that of Photosystem II reaction center protein T from Gnetum gnemon (Spanish joint-fir).